Consider the following 212-residue polypeptide: uncharacterized protein (212 aa).

Residues 97-151 are disordered; that stretch reads SDASEAKNDDRRSDGRFALYSVSDTPETTTASRSADRSTNPKTAKHPKSAAKPTV. The segment covering 100–111 has biased composition (basic and acidic residues); the sequence is SEAKNDDRRSDG.

This is an uncharacterized protein from Mycobacterium tuberculosis (strain CDC 1551 / Oshkosh).